The following is a 260-amino-acid chain: Triosephosphate isomerase (260 aa).

11–13 (NWK) is a substrate binding site. The active-site Electrophile is histidine 103. Catalysis depends on glutamate 175, which acts as the Proton acceptor. Substrate contacts are provided by residues glycine 181, serine 220, and 241 to 242 (GG).

Belongs to the triosephosphate isomerase family. Homodimer.

The protein localises to the cytoplasm. It catalyses the reaction D-glyceraldehyde 3-phosphate = dihydroxyacetone phosphate. Its pathway is carbohydrate biosynthesis; gluconeogenesis. It participates in carbohydrate degradation; glycolysis; D-glyceraldehyde 3-phosphate from glycerone phosphate: step 1/1. Involved in the gluconeogenesis. Catalyzes stereospecifically the conversion of dihydroxyacetone phosphate (DHAP) to D-glyceraldehyde-3-phosphate (G3P). This is Triosephosphate isomerase from Shewanella frigidimarina (strain NCIMB 400).